We begin with the raw amino-acid sequence, 596 residues long: Capsid protein VP1 (596 aa).

This sequence belongs to the microviridae F protein family.

It localises to the virion. It is found in the host cytoplasm. In terms of biological role, assembles to form an icosahedral capsid with a T=1 symmetry. The polypeptide is Capsid protein VP1 (Chlamydia phage 1 (Bacteriophage Chp1)).